We begin with the raw amino-acid sequence, 580 residues long: Protein O-linked-mannose beta-1,4-N-acetylglucosaminyltransferase 2 (580 aa).

Topologically, residues 1 to 4 (MHLS) are cytoplasmic. The helical; Signal-anchor for type II membrane protein transmembrane segment at 5–25 (AVLNALLVSVLAAVLWKHVRL) threads the bilayer. Over 26 to 580 (REHAAALEEE…PFADVLVCNT (555 aa)) the chain is Lumenal. 2 N-linked (GlcNAc...) asparagine glycosylation sites follow: N99 and N276. The 93-residue stretch at 488-580 (ARCQASVQGA…PFADVLVCNT (93 aa)) folds into the Fibronectin type-III domain.

This sequence belongs to the glycosyltransferase 61 family.

The protein resides in the endoplasmic reticulum membrane. The catalysed reaction is 3-O-(alpha-D-mannosyl)-L-threonyl-[protein] + UDP-N-acetyl-alpha-D-glucosamine = 3-O-(N-acetyl-beta-D-glucosaminyl-(1-&gt;4)-alpha-D-mannosyl)-L-threonyl-[protein] + UDP + H(+). It functions in the pathway protein modification; protein glycosylation. In terms of biological role, O-linked mannose beta-1,4-N-acetylglucosaminyltransferase that transfers UDP-N-acetyl-D-glucosamine to the 4-position of the mannose to generate N-acetyl-D-glucosamine-beta-1,4-O-D-mannosylprotein. Involved in the biosynthesis of the phosphorylated O-mannosyl trisaccharide (N-acetylgalactosamine-beta-3-N-acetylglucosamine-beta-4-(phosphate-6-)mannose), a carbohydrate structure present in alpha-dystroglycan (DAG1), which is required for binding laminin G-like domain-containing extracellular proteins with high affinity. This is Protein O-linked-mannose beta-1,4-N-acetylglucosaminyltransferase 2 (POMGNT2) from Canis lupus familiaris (Dog).